Consider the following 291-residue polypeptide: Ribosomal RNA small subunit methyltransferase A (291 aa).

S-adenosyl-L-methionine contacts are provided by His-21, Leu-23, Gly-48, Glu-70, Asp-95, and Asn-115.

It belongs to the class I-like SAM-binding methyltransferase superfamily. rRNA adenine N(6)-methyltransferase family. RsmA subfamily.

The protein localises to the cytoplasm. The enzyme catalyses adenosine(1518)/adenosine(1519) in 16S rRNA + 4 S-adenosyl-L-methionine = N(6)-dimethyladenosine(1518)/N(6)-dimethyladenosine(1519) in 16S rRNA + 4 S-adenosyl-L-homocysteine + 4 H(+). Specifically dimethylates two adjacent adenosines (A1518 and A1519) in the loop of a conserved hairpin near the 3'-end of 16S rRNA in the 30S particle. May play a critical role in biogenesis of 30S subunits. The chain is Ribosomal RNA small subunit methyltransferase A from Prochlorococcus marinus (strain NATL1A).